The following is a 239-amino-acid chain: C-8 sterol isomerase erg2 (239 aa).

Asparagine 11 carries N-linked (GlcNAc...) asparagine glycosylation. Residues lysine 27–alanine 47 form a helical membrane-spanning segment. Asparagine 73 carries an N-linked (GlcNAc...) asparagine glycan.

This sequence belongs to the ERG2 family.

The protein resides in the endoplasmic reticulum membrane. The enzyme catalyses fecosterol = episterol. Its pathway is steroid metabolism; ergosterol biosynthesis. Its function is as follows. C-8 sterol isomerase; part of the third module of ergosterol biosynthesis pathway that includes the late steps of the pathway. Erg2 catalyzes the reaction which results in unsaturation at C-7 in the B ring of sterols and thus converts fecosterol to episterol. The third module or late pathway involves the ergosterol synthesis itself through consecutive reactions that mainly occur in the endoplasmic reticulum (ER) membrane. Firstly, the squalene synthase erg9 catalyzes the condensation of 2 farnesyl pyrophosphate moieties to form squalene, which is the precursor of all steroids. Squalene synthase is crucial for balancing the incorporation of farnesyl diphosphate (FPP) into sterol and nonsterol isoprene synthesis. Secondly, squalene is converted into lanosterol by the consecutive action of the squalene epoxidase erg1 and the lanosterol synthase erg7. Then, the delta(24)-sterol C-methyltransferase erg6 methylates lanosterol at C-24 to produce eburicol. Eburicol is the substrate of the sterol 14-alpha demethylase encoded by cyp51A and cyp51B, to yield 4,4,24-trimethyl ergosta-8,14,24(28)-trienol. The C-14 reductase erg24 then reduces the C14=C15 double bond which leads to 4,4-dimethylfecosterol. A sequence of further demethylations at C-4, involving the C-4 demethylation complex containing the C-4 methylsterol oxidases erg25A or erg25B, the sterol-4-alpha-carboxylate 3-dehydrogenase erg26 and the 3-keto-steroid reductase erg27, leads to the production of fecosterol via 4-methylfecosterol. The C-8 sterol isomerase erg2 then catalyzes the reaction which results in unsaturation at C-7 in the B ring of sterols and thus converts fecosterol to episterol. The sterol-C5-desaturase erg3B then catalyzes the introduction of a C-5 double bond in the B ring to produce 5-dehydroepisterol. The 2 other sterol-C5-desaturases, erg3A and erg3C, seem to be less important in ergosterol biosynthesis. The C-22 sterol desaturase erg5 further converts 5-dehydroepisterol into ergosta-5,7,22,24(28)-tetraen-3beta-ol by forming the C-22(23) double bond in the sterol side chain. Finally, ergosta-5,7,22,24(28)-tetraen-3beta-ol is substrate of the C-24(28) sterol reductases erg4A and erg4B to produce ergosterol. Possible alternative sterol biosynthetic pathways might exist from fecosterol to ergosterol, depending on the activities of the erg3 isoforms. The chain is C-8 sterol isomerase erg2 from Aspergillus fumigatus (strain ATCC MYA-4609 / CBS 101355 / FGSC A1100 / Af293) (Neosartorya fumigata).